A 601-amino-acid polypeptide reads, in one-letter code: Protein NRT1/ PTR FAMILY 4.4 (601 aa).

The next 2 helical transmembrane spans lie at alanine 44 to asparagine 64 and alanine 82 to leucine 102. Threonine 112 carries the phosphothreonine modification. A run of 10 helical transmembrane segments spans residues methionine 113–leucine 133, threonine 160–isoleucine 180, phenylalanine 198–valine 218, valine 228–threonine 248, isoleucine 337–glutamine 357, alanine 386–leucine 406, leucine 420–valine 440, valine 453–phenylalanine 473, phenylalanine 493–valine 513, and histidine 544–serine 564.

The protein belongs to the major facilitator superfamily. Proton-dependent oligopeptide transporter (POT/PTR) (TC 2.A.17) family. As to expression, expressed in shoots, roots and stems.

It localises to the membrane. The sequence is that of Protein NRT1/ PTR FAMILY 4.4 (NPF4.4) from Arabidopsis thaliana (Mouse-ear cress).